The following is a 137-amino-acid chain: NADPH-dependent 7-cyano-7-deazaguanine reductase (137 aa).

Catalysis depends on cysteine 50, which acts as the Thioimide intermediate. The Proton donor role is filled by aspartate 57. Substrate-binding positions include 72–74 and 91–92; these read VEL and HE.

It belongs to the GTP cyclohydrolase I family. QueF type 1 subfamily.

The protein localises to the cytoplasm. It carries out the reaction 7-aminomethyl-7-carbaguanine + 2 NADP(+) = 7-cyano-7-deazaguanine + 2 NADPH + 3 H(+). It functions in the pathway tRNA modification; tRNA-queuosine biosynthesis. Catalyzes the NADPH-dependent reduction of 7-cyano-7-deazaguanine (preQ0) to 7-aminomethyl-7-deazaguanine (preQ1). This Synechocystis sp. (strain ATCC 27184 / PCC 6803 / Kazusa) protein is NADPH-dependent 7-cyano-7-deazaguanine reductase.